The following is a 111-amino-acid chain: High mobility group protein Z (111 aa).

A DNA-binding region (HMG box) is located at residues 6–72; the sequence is PKRPLSAYML…EYNKAVKEYE (67 aa). The residue at position 11 (serine 11) is a Phosphoserine. Positions 72–111 are disordered; the sequence is EANGGTDSGAPKKRKKAAAKPAKKAKKKESSEEEEEDESE. A compositionally biased stretch (basic residues) spans 82–98; the sequence is PKKRKKAAAKPAKKAKK. The segment covering 102–111 has biased composition (acidic residues); that stretch reads SEEEEEDESE.

The protein belongs to the HMGB family.

Its subcellular location is the nucleus. It is found in the chromosome. In Drosophila melanogaster (Fruit fly), this protein is High mobility group protein Z (HmgZ).